The sequence spans 159 residues: 17.7 kDa class I heat shock protein (159 aa).

Residues 45-159 (DAAAFAGARI…PDVKSIQISG (115 aa)) enclose the sHSP domain.

Belongs to the small heat shock protein (HSP20) family. May form oligomeric structures.

The protein localises to the cytoplasm. The sequence is that of 17.7 kDa class I heat shock protein (HSP17.7) from Oryza sativa subsp. japonica (Rice).